A 141-amino-acid chain; its full sequence is Protein NrdI (141 aa).

The protein belongs to the NrdI family.

In terms of biological role, probably involved in ribonucleotide reductase function. This Bifidobacterium animalis subsp. lactis (strain AD011) protein is Protein NrdI.